The following is a 580-amino-acid chain: Fumarate hydratase class I, aerobic (580 aa).

Positions 105, 224, and 318 each coordinate [4Fe-4S] cluster.

It belongs to the class-I fumarase family. Homodimer. The cofactor is [4Fe-4S] cluster.

The catalysed reaction is (S)-malate = fumarate + H2O. It catalyses the reaction oxaloacetate = enol-oxaloacetate. Its pathway is carbohydrate metabolism; tricarboxylic acid cycle; (S)-malate from fumarate: step 1/1. Its function is as follows. Catalyzes the reversible hydration of fumarate to (S)-malate. Functions as an aerobic enzyme in the direction of malate formation as part of the citric acid cycle. Accounts for about 80% of the fumarase activity when the bacteria grow aerobically. To a lesser extent, also displays D-tartrate dehydratase activity in vitro, but is not able to convert (R)-malate, L-tartrate or meso-tartrate. Can also catalyze the isomerization of enol- to keto-oxaloacetate. This chain is Fumarate hydratase class I, aerobic, found in Salmonella typhimurium (strain LT2 / SGSC1412 / ATCC 700720).